A 55-amino-acid chain; its full sequence is Sporulation killing factor (55 aa).

Positions 1-29 are excised as a propeptide; sequence MKRNQKEWESVSKKGLMKPGGTSIVKAAG. Cys-30 and Cys-45 are joined by a disulfide. The cyclopeptide (Cys-Ile) cross-link spans 30–55; that stretch reads CMGCWASKSIAMTRVCALPHPAMRAI. A cross-link (2-(S-cysteinyl)-methionine (Cys-Met)) is located at residues 33–41; the sequence is CWASKSIAM.

Post-translationally, this is a cyclic peptide. The first step in SKF maturation is probably thioether bond formation.

It localises to the secreted. Functionally, produces a 26-residue extracellular sporulation killing factor (SKF) that induces the lysis of other B.subtilis cells that have not entered the sporulation pathway, providing a source of nutrients to support sporulation, and at the same time delaying commitment to the energetically expensive and irreversible onset of sporulation. Can also inhibit growth of other bacteria at high concentrations. Addition of SKF to solid cultures induces killing, but it is much less effective than SDP (AC O34344). Has a role in protecting the secreted lipase LipA against proteolysis, either by modulating its folding or by acting as a protease inhibitor. The sequence is that of Sporulation killing factor from Bacillus subtilis (strain 168).